Consider the following 248-residue polypeptide: Probable transcriptional regulatory protein FTM_1203 (248 aa).

Belongs to the TACO1 family.

It is found in the cytoplasm. The chain is Probable transcriptional regulatory protein FTM_1203 from Francisella tularensis subsp. mediasiatica (strain FSC147).